The primary structure comprises 63 residues: Metallothionein-2 (63 aa).

The interval 1–30 is beta; that stretch reads MDPQDCTCAAGDSCSCAGSCKCKNCRCQSC. Cys-6, Cys-8, Cys-14, Cys-16, Cys-20, Cys-22, Cys-25, Cys-27, Cys-30, Cys-34, Cys-35, Cys-37, Cys-38, Cys-42, Cys-45, Cys-49, Cys-51, Cys-59, Cys-61, and Cys-62 together coordinate a divalent metal cation. The tract at residues 31 to 63 is alpha; that stretch reads RKSCCSCCPASCSNCAKGCVCKEPSSSKCSCCH.

Belongs to the metallothionein superfamily. Type 1 family.

Its function is as follows. Metallothioneins have a high content of cysteine residues that bind various heavy metals. This is Metallothionein-2 from Columba livia (Rock dove).